A 188-amino-acid polypeptide reads, in one-letter code: MKFSLFALLFVVVSCVDVGTQTRDAFILAHKQPLSTYAVENMDFVLEYGLYNVGDKPAQKVTIDDRHSFPTNSFDIVKGLLFVHFEQIPAGSNVTHSVVIRPRAFGFFNYTAAQVTYYTDNENHHVTLTNTPGEGYIYRQREYDRRFAPKYTYFLVFFLIVAPTTLGSFLLFQQSKARFPNVIKKKST.

The first 15 residues, 1-15 (MKFSLFALLFVVVSC), serve as a signal peptide directing secretion. Residues 16-151 (VDVGTQTRDA…EYDRRFAPKY (136 aa)) lie on the Lumenal side of the membrane. 2 N-linked (GlcNAc...) asparagine glycosylation sites follow: Asn-93 and Asn-109. Residues 152 to 172 (TYFLVFFLIVAPTTLGSFLLF) form a helical membrane-spanning segment. The Cytoplasmic portion of the chain corresponds to 173–188 (QQSKARFPNVIKKKST).

This sequence belongs to the TRAP-beta family. Heterotetramer of TRAP-alpha, TRAP-beta, TRAP-delta and TRAP-gamma.

It is found in the endoplasmic reticulum membrane. In terms of biological role, TRAP proteins are part of a complex whose function is to bind calcium to the ER membrane and thereby regulate the retention of ER resident proteins. This is Translocon-associated protein subunit beta from Caenorhabditis elegans.